The chain runs to 92 residues: UPF0223 protein SZO_10560 (92 aa).

The protein belongs to the UPF0223 family.

This Streptococcus equi subsp. zooepidemicus (strain H70) protein is UPF0223 protein SZO_10560.